The chain runs to 202 residues: Ras-related protein RIC1 (202 aa).

GTP contacts are provided by residues 15-23 (GDSGVGKSC), 33-40 (YLESYIST), 63-67 (DTAGQ), 121-124 (NKCD), and 151-153 (SAK). The Effector region motif lies at 37–45 (YISTIGVDF). A compositionally biased stretch (polar residues) spans 174–185 (ASQPATNASKPA). Residues 174-202 (ASQPATNASKPATVQMRGQPVAQQSSCCS) form a disordered region. 2 S-geranylgeranyl cysteine lipidation sites follow: cysteine 200 and cysteine 201.

Belongs to the small GTPase superfamily. Rab family.

The protein localises to the cell membrane. In terms of biological role, possesses GTPase activity. In Oryza sativa subsp. japonica (Rice), this protein is Ras-related protein RIC1 (RIC1).